Reading from the N-terminus, the 390-residue chain is Succinate--CoA ligase [ADP-forming] subunit beta (390 aa).

The ATP-grasp domain maps to lysine 9–glutamate 248. ATP-binding positions include lysine 50, glycine 57–glycine 59, glutamate 103, methionine 106, and glutamate 111. Residues asparagine 203 and aspartate 217 each coordinate Mg(2+). Substrate is bound by residues asparagine 268 and glycine 325–valine 327.

It belongs to the succinate/malate CoA ligase beta subunit family. As to quaternary structure, heterotetramer of two alpha and two beta subunits. Mg(2+) is required as a cofactor.

It catalyses the reaction succinate + ATP + CoA = succinyl-CoA + ADP + phosphate. It carries out the reaction GTP + succinate + CoA = succinyl-CoA + GDP + phosphate. Its pathway is carbohydrate metabolism; tricarboxylic acid cycle; succinate from succinyl-CoA (ligase route): step 1/1. In terms of biological role, succinyl-CoA synthetase functions in the citric acid cycle (TCA), coupling the hydrolysis of succinyl-CoA to the synthesis of either ATP or GTP and thus represents the only step of substrate-level phosphorylation in the TCA. The beta subunit provides nucleotide specificity of the enzyme and binds the substrate succinate, while the binding sites for coenzyme A and phosphate are found in the alpha subunit. This Prosthecochloris aestuarii (strain DSM 271 / SK 413) protein is Succinate--CoA ligase [ADP-forming] subunit beta.